An 83-amino-acid chain; its full sequence is uncharacterized protein (83 aa).

Residues 24-44 traverse the membrane as a helical segment; sequence AMTLLIITNTLLIILSYSVLL.

Its subcellular location is the host membrane. This is an uncharacterized protein from Acidianus sp. F28 (AFV-2).